The sequence spans 340 residues: Ferrochelatase (340 aa).

Fe cation contacts are provided by His202 and Glu283.

The protein belongs to the ferrochelatase family.

The protein localises to the cytoplasm. The enzyme catalyses heme b + 2 H(+) = protoporphyrin IX + Fe(2+). It functions in the pathway porphyrin-containing compound metabolism; protoheme biosynthesis; protoheme from protoporphyrin-IX: step 1/1. In terms of biological role, catalyzes the ferrous insertion into protoporphyrin IX. The protein is Ferrochelatase of Acinetobacter baylyi (strain ATCC 33305 / BD413 / ADP1).